Reading from the N-terminus, the 663-residue chain is Transforming growth factor beta activator LRRC32 (663 aa).

The N-terminal stretch at 1–17 (MSHQILLLLAMLTLGLA) is a signal peptide. Residues 18-628 (ISQRREQVPC…CEKGGLKNVN (611 aa)) lie on the Extracellular side of the membrane. The LRRNT domain occupies 22–49 (REQVPCRTVNKEALCHGLGLLQVPSVLS). 10 LRR repeats span residues 49–72 (SLDI…PLGF), 73–96 (YTAL…VFQA), 98–123 (PYLE…GLGR), 125–148 (PLLV…LLGE), 149–172 (TPRL…TFWG), 174–196 (PAVE…AFEA), 197–220 (LPHL…SLQQ), 222–241 (QVLD…PEPQ), 243–267 (QFQL…VFPR), and 269–287 (IYLN…LPRG). N204 carries N-linked (GlcNAc...) asparagine glycosylation. N-linked (GlcNAc...) asparagine glycosylation is found at N272, N305, and N309. The disordered stretch occupies residues 291–311 (LHAPSEGWSASPLSNPSRNAS). Positions 301 to 311 (SPLSNPSRNAS) are enriched in polar residues. 11 LRR repeats span residues 315 to 338 (LSQL…FLEH), 340 to 362 (TSLR…QVDS), 363 to 386 (LPCL…TKVL), 387 to 409 (GSLQ…TFAS), 411 to 433 (ASLQ…AEPG), 443 to 466 (IPTL…SFLH), 468 to 489 (PLTE…ALVG), 491 to 514 (EASL…LPCF), 515 to 539 (LRLK…AVSL), 541 to 559 (VLDL…AMGG), and 561 to 584 (ETSL…WLAA). N346 carries an N-linked (GlcNAc...) asparagine glycan. Residue N546 is glycosylated (N-linked (GlcNAc...) asparagine). An LRRCT domain is found at 572–621 (NPLSCCGNGWLAAQLHQGRVDVDATQDLICRFGSQEELSLSLVRPEDCEK). Residues 629–649 (LILLLSFTLVSAIVLTTLATI) form a helical membrane-spanning segment. Residues 650–663 (CFLRRQKLSQQYKA) are Cytoplasmic-facing.

It belongs to the LRRC32/LRRC33 family. Interacts with TGFB1; associates via disulfide bonds with the Latency-associated peptide chain (LAP) regulatory chain of TGFB1, leading to regulate activation of TGF-beta-1. Interacts with TGFB2. Interacts with TGFB3; associates via disulfide bonds with the Latency-associated peptide chain (LAP) regulatory chain of TGFB3, leading to regulate activation of TGF-beta-3. Interacts with LAPTM4B; decreases TGFB1 production in regulatory T-cells. In terms of tissue distribution, present in medial edge epithelial cells at 14.5 dpc (at protein level).

It localises to the cell membrane. The protein resides in the cell surface. Functionally, key regulator of transforming growth factor beta (TGFB1, TGFB2 and TGFB3) that controls TGF-beta activation by maintaining it in a latent state during storage in extracellular space. Associates specifically via disulfide bonds with the Latency-associated peptide (LAP), which is the regulatory chain of TGF-beta, and regulates integrin-dependent activation of TGF-beta. Able to outcompete LTBP1 for binding to LAP regulatory chain of TGF-beta. Controls activation of TGF-beta-1 (TGFB1) on the surface of activated regulatory T-cells (Tregs). Required for epithelial fusion during palate development by regulating activation of TGF-beta-3 (TGFB3). In Mus musculus (Mouse), this protein is Transforming growth factor beta activator LRRC32.